The sequence spans 159 residues: Ribosomal RNA large subunit methyltransferase H (159 aa).

S-adenosyl-L-methionine is bound by residues Leu-76, Gly-108, and 127 to 132 (FSKMTF).

This sequence belongs to the RNA methyltransferase RlmH family. As to quaternary structure, homodimer.

It is found in the cytoplasm. It catalyses the reaction pseudouridine(1915) in 23S rRNA + S-adenosyl-L-methionine = N(3)-methylpseudouridine(1915) in 23S rRNA + S-adenosyl-L-homocysteine + H(+). Its function is as follows. Specifically methylates the pseudouridine at position 1915 (m3Psi1915) in 23S rRNA. The protein is Ribosomal RNA large subunit methyltransferase H of Clostridium botulinum (strain Langeland / NCTC 10281 / Type F).